We begin with the raw amino-acid sequence, 49 residues long: Large ribosomal subunit protein bL33B (49 aa).

The protein belongs to the bacterial ribosomal protein bL33 family.

This is Large ribosomal subunit protein bL33B (rpmGB) from Bacillus licheniformis.